A 449-amino-acid polypeptide reads, in one-letter code: Glutamyl-tRNA reductase (449 aa).

Residues Thr-58 to Arg-61, Ser-121, Glu-126 to Gln-128, and Gln-132 each bind substrate. The Nucleophile role is filled by Cys-59. Gly-203–Ala-208 lines the NADP(+) pocket.

This sequence belongs to the glutamyl-tRNA reductase family. Homodimer.

The enzyme catalyses (S)-4-amino-5-oxopentanoate + tRNA(Glu) + NADP(+) = L-glutamyl-tRNA(Glu) + NADPH + H(+). It functions in the pathway porphyrin-containing compound metabolism; protoporphyrin-IX biosynthesis; 5-aminolevulinate from L-glutamyl-tRNA(Glu): step 1/2. Functionally, catalyzes the NADPH-dependent reduction of glutamyl-tRNA(Glu) to glutamate 1-semialdehyde (GSA). In Helicobacter pylori (strain J99 / ATCC 700824) (Campylobacter pylori J99), this protein is Glutamyl-tRNA reductase.